The primary structure comprises 337 residues: Glyceraldehyde-3-phosphate dehydrogenase (337 aa).

Residues 12–13 (RI), Asp-34, and Lys-79 contribute to the NAD(+) site. D-glyceraldehyde 3-phosphate contacts are provided by residues 150–152 (SCT), Thr-181, 210–211 (TG), and Arg-233. Residue Cys-151 is the Nucleophile of the active site. Residue Asn-315 participates in NAD(+) binding.

Belongs to the glyceraldehyde-3-phosphate dehydrogenase family. As to quaternary structure, homotetramer.

It is found in the cytoplasm. The enzyme catalyses D-glyceraldehyde 3-phosphate + phosphate + NAD(+) = (2R)-3-phospho-glyceroyl phosphate + NADH + H(+). Its pathway is carbohydrate degradation; glycolysis; pyruvate from D-glyceraldehyde 3-phosphate: step 1/5. The sequence is that of Glyceraldehyde-3-phosphate dehydrogenase (GPD1) from Cochliobolus heterostrophus (Southern corn leaf blight fungus).